The chain runs to 504 residues: Maturase K (504 aa).

Belongs to the intron maturase 2 family. MatK subfamily.

It localises to the plastid. The protein resides in the chloroplast. In terms of biological role, usually encoded in the trnK tRNA gene intron. Probably assists in splicing its own and other chloroplast group II introns. This Guizotia abyssinica (Niger) protein is Maturase K.